A 377-amino-acid chain; its full sequence is MTTTMSTLPVVLVDEILARVPITSLRSLRSTCKKWEASSKTNLVGGKATARKSSHVGFILIGDKICSMKLDLNGGDDFVDTSVNQVSAFDGFAISQLFHCDGLLFCISNNHYSNYTLMVCNMYLGETRLIQNRSLFESYQNFCSYAFGYDSSKNRNHKILRNNSVSGGYEIYSLKSDSWKDLNVDLEKSIHLWRLGSVSLKGNAYFRVIKVIEEGVWEYNLLCFDFTRESFGKLLSLPFESLGDEGEGIMVISCVRDDHLAVLYQRDTLGIWISTEIEPNKVSWREFLQVDLATLDGFPDVFIAGRFIVDEEKQVVVVFGQETELDLNHGNAFIFGRDGYFTSFTVGDAPPEDFTSYVPSLVSLQIDKTGKRKARDD.

Residues 2 to 48 (TTTMSTLPVVLVDEILARVPITSLRSLRSTCKKWEASSKTNLVGGKA) enclose the F-box domain.

This is F-box protein At1g11810 from Arabidopsis thaliana (Mouse-ear cress).